Here is a 367-residue protein sequence, read N- to C-terminus: Cis-3-hydroxy-L-proline dehydratase (367 aa).

Lys165 functions as the Proton donor/acceptor in the catalytic mechanism. Mg(2+) is bound by residues Asp193, Glu218, and Asp241. The Proton donor/acceptor role is filled by Lys265.

It belongs to the mandelate racemase/muconate lactonizing enzyme family. It depends on Mg(2+) as a cofactor.

It carries out the reaction cis-3-hydroxy-L-proline = 1-pyrroline-2-carboxylate + H2O. In terms of biological role, catalyzes the dehydration of cis-3-hydroxy-L-proline (c3LHyp) to Delta(1)-pyrroline-2-carboxylate (Pyr2C). Is likely involved in a degradation pathway that converts c3LHyp to L-proline, which allows L.aggregata to grow on c3LHyp as a sole carbon source. Also catalyzes the epimerization of c3LHyp to trans-3-hydroxy-D-proline (t3DHyp), a competing reaction occurring from the same enolate anion intermediate. L-proline, t3LHyp, t4LHyp, c4DHyp and their methylated derivatives are not substrates. This is Cis-3-hydroxy-L-proline dehydratase from Roseibium aggregatum (strain ATCC 25650 / DSM 13394 / JCM 20685 / NBRC 16684 / NCIMB 2208 / IAM 12614 / B1) (Stappia aggregata).